The sequence spans 210 residues: Dephospho-CoA kinase (210 aa).

The DPCK domain occupies 4–202 (WVGLTGGIGS…AFYSGIFASK (199 aa)). 12–17 (GSGKSA) is a binding site for ATP.

It belongs to the CoaE family.

It localises to the cytoplasm. It catalyses the reaction 3'-dephospho-CoA + ATP = ADP + CoA + H(+). It functions in the pathway cofactor biosynthesis; coenzyme A biosynthesis; CoA from (R)-pantothenate: step 5/5. Functionally, catalyzes the phosphorylation of the 3'-hydroxyl group of dephosphocoenzyme A to form coenzyme A. This Neisseria meningitidis serogroup A / serotype 4A (strain DSM 15465 / Z2491) protein is Dephospho-CoA kinase.